We begin with the raw amino-acid sequence, 218 residues long: Guanylate kinase (218 aa).

In terms of domain architecture, Guanylate kinase-like spans 10-190 (GLLIILSSPS…TEERLKTIIT (181 aa)). 17-24 (SPSGAGKS) provides a ligand contact to ATP.

The protein belongs to the guanylate kinase family.

The protein resides in the cytoplasm. The enzyme catalyses GMP + ATP = GDP + ADP. In terms of biological role, essential for recycling GMP and indirectly, cGMP. In Jannaschia sp. (strain CCS1), this protein is Guanylate kinase.